The following is a 418-amino-acid chain: Lactosylceramide alpha-2,3-sialyltransferase (418 aa).

The interval Met-1–Ala-25 is disordered. Residues Met-1–Ser-61 lie on the Cytoplasmic side of the membrane. A helical; Signal-anchor for type II membrane protein transmembrane segment spans residues Leu-62–Ile-82. Residues Leu-83 to Phe-418 are Lumenal-facing. N-linked (GlcNAc...) asparagine glycosylation is found at Asn-86, Asn-236, and Asn-390. Cys-195 and Cys-353 are joined by a disulfide.

Belongs to the glycosyltransferase 29 family. N-glycosylated. As to expression, ubiquitous. High expression in brain, skeletal muscle, placenta, and testis. mRNA widely distributed in human brain, but slightly elevated expression was observed in the cerebral cortex, temporal lobe, and putamen.

Its subcellular location is the golgi apparatus membrane. The enzyme catalyses a beta-D-Gal-(1-&gt;4)-beta-D-Glc-(1&lt;-&gt;1)-Cer(d18:1(4E)) + CMP-N-acetyl-beta-neuraminate = a ganglioside GM3 (d18:1(4E)) + CMP + H(+). It catalyses the reaction ganglioside GA2 (d18:1(4E)/18:0) + CMP-N-acetyl-beta-neuraminate = ganglioside GM2 (d18:1(4E)/18:0) + CMP + H(+). The catalysed reaction is a beta-D-Gal-(1&lt;-&gt;1')-ceramide + CMP-N-acetyl-beta-neuraminate = N-acetyl-alpha-neuraminosyl-(2-&gt;3)-beta-D-galactosyl-(1&lt;-&gt;1')-ceramide + CMP + H(+). It carries out the reaction a beta-D-galactosyl-(1&lt;-&gt;1')-N-acylsphing-4-enine + CMP-N-acetyl-beta-neuraminate = a ganglioside GM4 (d18:1(4E)) + CMP + H(+). The enzyme catalyses ganglioside GA1 (d18:1(4E)/18:0) + CMP-N-acetyl-beta-neuraminate = ganglioside GM1 (d18:1(4E)/18:0) + CMP + H(+). The protein operates within glycolipid biosynthesis. Its function is as follows. Transfers the sialyl group (N-acetyl-alpha-neuraminyl or NeuAc) from CMP-NeuAc to the non-reducing terminal galactose (Gal) of glycosphingolipids forming gangliosides (important molecules involved in the regulation of multiple cellular processes, including cell proliferation and differentiation, apoptosis, embryogenesis, development, and oncogenesis). Mainly involved in the biosynthesis of ganglioside GM3 but can also use different glycolipids as substrate acceptors such as D-galactosylceramide (GalCer), asialo-GM2 (GA2) and asialo-GM1 (GA1), although less preferentially than beta-D-Gal-(1-&gt;4)-beta-D-Glc-(1&lt;-&gt;1)-Cer (LacCer). This Homo sapiens (Human) protein is Lactosylceramide alpha-2,3-sialyltransferase (ST3GAL5).